The chain runs to 446 residues: MDLSESMEVDNGTTSENLKHVQITFFSKDKDLPEIPDAVFDVPTVAECDDLNLLLNKTIQATDDAWKEKKFEFLVGETFLRTSLAEFIEEYEVETETILKIECIIGIEAPKPLHDIQAPDWVSSVQVANGHTKSTNLFSIFSTTYGGDIVIVDRKGKETKLSVNSANRILKCSGIVRTTKKVQLEGTEFIVGGENQLLTLYEIEKGALVEKIVFRGHERAVECVSVNSDATRAISGSVDTNLKVWNLDPSDEATIYEKEEEESSAKKKRKKDTRTKVPMVTIGGHRDKVSSVVWCPWKSGHAFSCSWDHTVVQWDLELAGEVSRIKGPKSFTSIDIHPTSNLLISSCTDAIPRLYDPKNRDGAMVKQSFIGHQNGWVESVKWNPVDENQFVSVSTDKTAKMWDVRSSKSSLFDIHGHEDRILCAAWNEGLIATGSADCSIKIFETS.

A ubiquitin-like (UBL) domain region spans residues 21–105 (VQITFFSKDK…ETILKIECII (85 aa)). 2 WD repeats span residues 171–211 (KCSG…LVEK) and 216–255 (GHER…EATI). The segment at 256–275 (YEKEEEESSAKKKRKKDTRT) is disordered. WD repeat units lie at residues 284-324 (GHRD…EVSR), 326-365 (KGPK…GAMV), 371-412 (GHQN…SSLF), and 416-446 (GHED…FETS).

This sequence belongs to the WD repeat WDR12/YTM1 family.

Its subcellular location is the nucleus. The protein resides in the nucleolus. It is found in the nucleoplasm. Its function is as follows. Required for maturation of ribosomal RNAs and formation of the large ribosomal subunit. This chain is Ribosome biogenesis protein WDR12 homolog, found in Caenorhabditis briggsae.